The following is a 322-amino-acid chain: Nitrilase (322 aa).

The region spanning 5 to 283 (VRVGAVQSEP…EAILTADIDL (279 aa)) is the CN hydrolase domain. Catalysis depends on E45, which acts as the Proton acceptor. Residue K127 is part of the active site. C162 functions as the Nucleophile in the catalytic mechanism.

This sequence belongs to the carbon-nitrogen hydrolase superfamily. Nitrilase family.

The catalysed reaction is a nitrile + 2 H2O = a carboxylate + NH4(+). In terms of biological role, nitrilase that hydrolyzes preferentially 4-cyanopyridine. The sequence is that of Nitrilase from Talaromyces marneffei (strain ATCC 18224 / CBS 334.59 / QM 7333) (Penicillium marneffei).